Reading from the N-terminus, the 388-residue chain is MGPKKSTKMSLNAFLGDESFGSTNWADDIDDLPALPQDRTTSTYRATPSSADAGYNAPSSTFESVRSPPESRREGGMGSGYQRDAIPIPSEPPFTAHVGNLSFDLTENDLGDFFGEGVTSIRLVIDPLTERSRGFGYVEFETADTLSAALALSGEDLMGRPVRITVAEPRRSFAREERSTGDWVRRGPLPPAEPAESPFGKRRTNSGRFRDPARDPSDRVREEPREWVRRGPLPPRESSERPRLNLKPRSSSNVNTEATPSATTTTSSKPKRDPFGGAKPVDNTSVLQRVEEKLAKRTQSFRREDNANRERSTSRKPSADKAEKTDKTDAIAEKVSDIRLGDGEKKSSETDSEVAATKTPATEDAPATNAGEAEEEEGWTKIGKGRKH.

The segment at 18–84 (ESFGSTNWAD…GGMGSGYQRD (67 aa)) is disordered. Positions 38–50 (DRTTSTYRATPSS) are enriched in polar residues. 3 positions are modified to phosphoserine: serine 49, serine 50, and serine 60. A Phosphothreonine modification is found at threonine 61. A phosphoserine mark is found at serine 64, serine 67, and serine 71. In terms of domain architecture, RRM spans 94–169 (FTAHVGNLSF…RPVRITVAEP (76 aa)). The span at 171-185 (RSFAREERSTGDWVR) shows a compositional bias: basic and acidic residues. The segment at 171-388 (RSFAREERST…WTKIGKGRKH (218 aa)) is disordered. Serine 197 carries the post-translational modification Phosphoserine. Positions 208-229 (RFRDPARDPSDRVREEPREWVR) are enriched in basic and acidic residues. A compositionally biased stretch (polar residues) spans 248 to 257 (PRSSSNVNTE). Phosphoserine is present on residues serine 250, serine 251, and serine 252. Over residues 258-268 (ATPSATTTTSS) the composition is skewed to low complexity. Residues 289–349 (RVEEKLAKRT…LGDGEKKSSE (61 aa)) are compositionally biased toward basic and acidic residues. Serine 347 carries the phosphoserine modification.

Its subcellular location is the cytoplasm. The sequence is that of Probable RNA-binding protein sce3 (sce3) from Schizosaccharomyces pombe (strain 972 / ATCC 24843) (Fission yeast).